The primary structure comprises 100 residues: Co-chaperonin GroES (100 aa).

The protein belongs to the GroES chaperonin family. In terms of assembly, heptamer of 7 subunits arranged in a ring. Interacts with the chaperonin GroEL.

The protein resides in the cytoplasm. Functionally, together with the chaperonin GroEL, plays an essential role in assisting protein folding. The GroEL-GroES system forms a nano-cage that allows encapsulation of the non-native substrate proteins and provides a physical environment optimized to promote and accelerate protein folding. GroES binds to the apical surface of the GroEL ring, thereby capping the opening of the GroEL channel. The chain is Co-chaperonin GroES from Mycobacterium marinum (strain ATCC BAA-535 / M).